The primary structure comprises 83 residues: EMBRYO SURROUNDING FACTOR 1.1 (83 aa).

Residues 1-22 form the signal peptide; that stretch reads MKSSHTSLICILMLSLVALHQC. Intrachain disulfides connect C41–C56, C46–C75, C54–C71, and C57–C64.

Belongs to the MEG family. In terms of tissue distribution, expressed exclusively in ovule embryo sacs and in early developing endosperms.

Its function is as follows. Maternally-contributed central cell peptide regulating suspensor development and correct auxin distribution in early developing embryos. The sequence is that of EMBRYO SURROUNDING FACTOR 1.1 (ESF1.1) from Arabidopsis thaliana (Mouse-ear cress).